The sequence spans 249 residues: 4-hydroxy-tetrahydrodipicolinate reductase (249 aa).

NAD(+)-binding positions include A77–T79 and S101–T104. Residue H133 is the Proton donor/acceptor of the active site. Residue H134 coordinates (S)-2,3,4,5-tetrahydrodipicolinate. The Proton donor role is filled by K137. G143–T144 is a binding site for (S)-2,3,4,5-tetrahydrodipicolinate.

The protein belongs to the DapB family.

Its subcellular location is the cytoplasm. The enzyme catalyses (S)-2,3,4,5-tetrahydrodipicolinate + NAD(+) + H2O = (2S,4S)-4-hydroxy-2,3,4,5-tetrahydrodipicolinate + NADH + H(+). The catalysed reaction is (S)-2,3,4,5-tetrahydrodipicolinate + NADP(+) + H2O = (2S,4S)-4-hydroxy-2,3,4,5-tetrahydrodipicolinate + NADPH + H(+). It participates in amino-acid biosynthesis; L-lysine biosynthesis via DAP pathway; (S)-tetrahydrodipicolinate from L-aspartate: step 4/4. In terms of biological role, catalyzes the conversion of 4-hydroxy-tetrahydrodipicolinate (HTPA) to tetrahydrodipicolinate. The sequence is that of 4-hydroxy-tetrahydrodipicolinate reductase from Exiguobacterium sp. (strain ATCC BAA-1283 / AT1b).